Reading from the N-terminus, the 284-residue chain is Tegument protein VP22 (284 aa).

2 disordered regions span residues 1 to 126 (MSYY…WSID) and 239 to 284 (LYAS…SRRR). The segment covering 74–83 (SRDDDDRRQP) has biased composition (basic and acidic residues). Residues 94–108 (ERRKSQTTVTTRRKT) are compositionally biased toward basic residues. The segment covering 115 to 126 (KSSNSNGPWSID) has biased composition (polar residues).

The protein belongs to the alphaherpesvirinae VP22 tegument protein family. In terms of assembly, interacts with gE (via C-terminus); this interaction is necessary for the recruitment of VP22 to the Golgi and its packaging into virions. Interacts with gM (via C-terminus). Interacts with VP16; this interaction allows the formation of a tripartite complex composed of VP16, VP22 and UL41/VHS. Interacts with the capsid-binding protein UL16. Interacts with host CGAS. In terms of processing, highly phosphorylated in the host cell. Packaging is selective for underphosphorylated forms.

The protein localises to the virion tegument. It is found in the host cytoplasm. The protein resides in the host nucleus. Its subcellular location is the host Golgi apparatus. In terms of biological role, tegument protein that plays different roles during the time course of infection. Participates in both the accumulation of viral mRNAs and viral protein translation at late time of infection. Modulates the RNase activity of the virion host shutoff protein UL41 probably to ensure necessary levels of key cellular mRNAs and proteins. Plays a role in microtubule reorganization that occurs after viral infection by stabilizing microtubule network. Plays a role in the inhibition of host innate immune system by targeting the CGAS enzymatic activity which is the principal cytosolic DNA sensor that detects invading viral DNA. Acts by mediating disruption of liquid-like droplets in which CGAS is activated, thereby preventing CGAS activity. This chain is Tegument protein VP22 (UL49), found in Amazona oratrix (yellow-headed parrot).